The chain runs to 420 residues: Transmembrane protease serine 11B-like protein (420 aa).

The Cytoplasmic portion of the chain corresponds to 1–19 (MTVSKLRPVIASRKSFPPW). A helical; Signal-anchor for type II membrane protein transmembrane segment spans residues 20–40 (MIILGVLGVLAILGLIIGLLV). The Extracellular segment spans residues 41–420 (HFLAVENKIY…RDWIASKTGI (380 aa)). The 118-residue stretch at 48 to 165 (KIYYYQGSFK…GSLKLTEITK (118 aa)) folds into the SEA domain. N-linked (GlcNAc...) asparagine glycosylation is found at N111 and N146. Residues 189–419 (ITGGSTAQKG…YRDWIASKTG (231 aa)) enclose the Peptidase S1 domain. C214 and C230 are oxidised to a cystine. The active-site Charge relay system is the H229. N-linked (GlcNAc...) asparagine glycosylation is present at N239. D274 acts as the Charge relay system in catalysis. 2 disulfides stabilise this stretch: C339–C355 and C366–C395. The active-site Charge relay system is the S370.

The protein belongs to the peptidase S1 family.

The protein resides in the membrane. It is found in the cell membrane. Its activity is regulated as follows. Inhibited by aprotinin, leupeptin, benzamidine, SERPINA1, SPINT1 and SPINT2. Functionally, serine protease. This chain is Transmembrane protease serine 11B-like protein (Tmprss11bnl), found in Rattus norvegicus (Rat).